We begin with the raw amino-acid sequence, 92 residues long: C-C motif chemokine 3 (92 aa).

A signal peptide spans 1 to 26; it reads MQVSTAALAVLLCTVALCNRISATFA. Cystine bridges form between Cys33-Cys57 and Cys34-Cys73.

This sequence belongs to the intercrine beta (chemokine CC) family. As to quaternary structure, self-associates. Also heterodimer of MIP-1-alpha(4-69) and MIP-1-beta(3-69). Interacts with CCR1.

It is found in the secreted. In terms of biological role, monokine with inflammatory and chemokinetic properties. Binds to CCR1, CCR4 and CCR5. One of the major HIV-suppressive factors produced by CD8+ T-cells. Recombinant MIP-1-alpha induces a dose-dependent inhibition of different strains of HIV-1, HIV-2, and simian immunodeficiency virus (SIV). The chain is C-C motif chemokine 3 (CCL3) from Macaca mulatta (Rhesus macaque).